Consider the following 474-residue polypeptide: Phenylalanine--tRNA ligase alpha subunit (474 aa).

L-phenylalanine contacts are provided by residues T317, Q356–E358, and Y396. A Mg(2+)-binding site is contributed by E398. F421 contributes to the L-phenylalanine binding site.

It belongs to the class-II aminoacyl-tRNA synthetase family. Phe-tRNA synthetase alpha subunit type 2 subfamily. As to quaternary structure, tetramer of two alpha and two beta subunits. It depends on Mg(2+) as a cofactor.

The protein resides in the cytoplasm. It catalyses the reaction tRNA(Phe) + L-phenylalanine + ATP = L-phenylalanyl-tRNA(Phe) + AMP + diphosphate + H(+). The polypeptide is Phenylalanine--tRNA ligase alpha subunit (Archaeoglobus fulgidus (strain ATCC 49558 / DSM 4304 / JCM 9628 / NBRC 100126 / VC-16)).